The chain runs to 154 residues: Large ribosomal subunit protein uL23z (154 aa).

Belongs to the universal ribosomal protein uL23 family.

Its function is as follows. Binds to a specific region on the 26S rRNA. This chain is Large ribosomal subunit protein uL23z (RPL23AA), found in Arabidopsis thaliana (Mouse-ear cress).